The sequence spans 412 residues: Phosphatidylinositol 3,4,5-trisphosphate 3-phosphatase and protein-tyrosine-phosphatase PTEN1 (412 aa).

In terms of domain architecture, Phosphatase tensin-type spans 42–211 (RRLIIGGYDL…KYWSDLLSFS (170 aa)). Catalysis depends on cysteine 152, which acts as the Phosphocysteine intermediate. Residues 239-396 (VDSVFFVVSE…FSLELLFGPA (158 aa)) enclose the C2 tensin-type domain.

It belongs to the PTEN phosphatase protein family. In terms of tissue distribution, expressed exclusively in pollen grains during the late stage of development (at protein level).

It catalyses the reaction O-phospho-L-tyrosyl-[protein] + H2O = L-tyrosyl-[protein] + phosphate. The enzyme catalyses a 1,2-diacyl-sn-glycero-3-phospho-(1D-myo-inositol-3,4,5-trisphosphate) + H2O = a 1,2-diacyl-sn-glycero-3-phospho-(1D-myo-inositol-4,5-bisphosphate) + phosphate. Its activity is regulated as follows. Inhibited by vanadate. Functionally, protein tyrosine phosphatase that also exhibits lipid phosphatase activity. Can use phosphatidylinositol substrates such as PtdIns(3,4,5)P(3) as substrate. Pollen-specific phosphatase required for pollen development. This is Phosphatidylinositol 3,4,5-trisphosphate 3-phosphatase and protein-tyrosine-phosphatase PTEN1 from Arabidopsis thaliana (Mouse-ear cress).